The following is a 79-amino-acid chain: RNA-binding protein Hfq (79 aa).

Positions 10–69 (GPFLNALRKEHVPVSIYLVNGIKLQGNIESFDQYVVLLRNTVTQMVYKHAISTVVPARAV) constitute a Sm domain.

It belongs to the Hfq family. In terms of assembly, homohexamer.

RNA chaperone that binds small regulatory RNA (sRNAs) and mRNAs to facilitate mRNA translational regulation in response to envelope stress, environmental stress and changes in metabolite concentrations. Also binds with high specificity to tRNAs. The polypeptide is RNA-binding protein Hfq (Cupriavidus necator (strain ATCC 17699 / DSM 428 / KCTC 22496 / NCIMB 10442 / H16 / Stanier 337) (Ralstonia eutropha)).